The primary structure comprises 461 residues: CBL-interacting protein kinase 5 (461 aa).

The 255-residue stretch at 12-266 folds into the Protein kinase domain; it reads YELGRMLGQG…VEKLVEHPWF (255 aa). ATP is bound by residues 18 to 26 and Lys41; that span reads LGQGTFAKV. Catalysis depends on Asp134, which acts as the Proton acceptor. The tract at residues 152 to 181 is activation loop; it reads DFGLSAFKECQKQDGLLHTTCGTPAYVAPE. Positions 300 to 334 constitute an NAF domain; sequence EGKAKEPASSLKPVSLNAFDIISLSKGFDLSGLFE. Positions 340 to 369 are PPI; the sequence is KADSRFMTQKPASAIVSKLEQIAETESFKV. The disordered stretch occupies residues 440–461; that stretch reads HPSLAQSSTLTQSSKSISRHAI. Over residues 442 to 455 the composition is skewed to low complexity; sequence SLAQSSTLTQSSKS.

It belongs to the protein kinase superfamily. CAMK Ser/Thr protein kinase family. SNF1 subfamily. Mn(2+) is required as a cofactor.

The catalysed reaction is L-seryl-[protein] + ATP = O-phospho-L-seryl-[protein] + ADP + H(+). It catalyses the reaction L-threonyl-[protein] + ATP = O-phospho-L-threonyl-[protein] + ADP + H(+). Its function is as follows. CIPK serine-threonine protein kinases interact with CBL proteins. Binding of a CBL protein to the regulatory NAF domain of CIPK protein lead to the activation of the kinase in a calcium-dependent manner. The sequence is that of CBL-interacting protein kinase 5 (CIPK5) from Oryza sativa subsp. japonica (Rice).